The sequence spans 292 residues: UPF0696 protein C11orf68 homolog (292 aa).

Residues 1–10 (MAAAAAAVAG) are compositionally biased toward low complexity. The segment at 1 to 60 (MAAAAAAVAGAGRGGGGGAEPRQERSRARGWAGAERSEGRRMEPGEELEEEDSPGGREDG) is disordered. Residues 35–44 (ERSEGRRMEP) show a composition bias toward basic and acidic residues.

Belongs to the UPF0696 family.

The chain is UPF0696 protein C11orf68 homolog from Bos taurus (Bovine).